The primary structure comprises 811 residues: Probable glutamine--tRNA ligase (811 aa).

The tract at residues 190–217 is disordered; sequence DAAAGKKKGAKAKNSKQKTVDSGKAKEQ. Residues 194 to 205 show a composition bias toward basic residues; that stretch reads GKKKGAKAKNSK. Over residues 207–217 the composition is skewed to basic and acidic residues; the sequence is KTVDSGKAKEQ. A 'HIGH' region motif is present at residues 269–279; the sequence is PEPNGYLHIGH. ATP-binding positions include 270 to 272 and 276 to 282; these read EPN and HIGHSKA. Positions 302 and 447 each coordinate L-glutamine. ATP-binding positions include Thr466, 495 to 496, and 503 to 505; these read RL and MSK. Positions 502–506 match the 'KMSKS' region motif; sequence LMSKR.

Belongs to the class-I aminoacyl-tRNA synthetase family.

The protein localises to the cytoplasm. It carries out the reaction tRNA(Gln) + L-glutamine + ATP = L-glutaminyl-tRNA(Gln) + AMP + diphosphate. The chain is Probable glutamine--tRNA ligase (qrs1) from Schizosaccharomyces pombe (strain 972 / ATCC 24843) (Fission yeast).